A 431-amino-acid chain; its full sequence is Fumarylacetoacetase (431 aa).

Residue Asp-133 coordinates Ca(2+). Tyr-135 is a substrate binding site. His-140 (proton acceptor) is an active-site residue. Arg-149 lines the substrate pocket. Residues Glu-209, Glu-211, and Asp-243 each coordinate Ca(2+). Residue Asp-243 participates in Mg(2+) binding. The substrate site is built by Gln-250 and Tyr-254. Residues Lys-263 and Thr-267 each coordinate Mg(2+). Thr-362 is a binding site for substrate.

It belongs to the FAH family. Ca(2+) is required as a cofactor. Requires Mg(2+) as cofactor.

It catalyses the reaction 4-fumarylacetoacetate + H2O = acetoacetate + fumarate + H(+). It participates in amino-acid degradation; L-phenylalanine degradation; acetoacetate and fumarate from L-phenylalanine: step 6/6. Functionally, use of phenylalanine and phenylacetate as a carbon source. The polypeptide is Fumarylacetoacetase (fahA) (Emericella nidulans (strain FGSC A4 / ATCC 38163 / CBS 112.46 / NRRL 194 / M139) (Aspergillus nidulans)).